The sequence spans 520 residues: Cholesterol side-chain cleavage enzyme, mitochondrial (520 aa).

Residues 1–39 (MLARGLPFRSALVKACPPLLNTGREGWGHHRVGTGEGAG) constitute a mitochondrion transit peptide. Residues 27 to 47 (WGHHRVGTGEGAGISTRTPRP) form a disordered region. Cysteine 461 contacts heme.

Belongs to the cytochrome P450 family. In terms of assembly, interacts with FDX1/adrenodoxin. Heme is required as a cofactor.

Its subcellular location is the mitochondrion inner membrane. It carries out the reaction 6 reduced [adrenodoxin] + cholesterol + 3 O2 + 6 H(+) = 4-methylpentanal + pregnenolone + 6 oxidized [adrenodoxin] + 4 H2O. The catalysed reaction is 2 reduced [adrenodoxin] + cholesterol + O2 + 2 H(+) = (22R)-hydroxycholesterol + 2 oxidized [adrenodoxin] + H2O. The enzyme catalyses (22R)-hydroxycholesterol + 2 reduced [adrenodoxin] + O2 + 2 H(+) = (20R,22R)-20,22-dihydroxycholesterol + 2 oxidized [adrenodoxin] + H2O. It catalyses the reaction (20R,22R)-20,22-dihydroxycholesterol + 2 reduced [adrenodoxin] + O2 + 2 H(+) = 4-methylpentanal + pregnenolone + 2 oxidized [adrenodoxin] + 2 H2O. The protein operates within lipid metabolism; C21-steroid hormone metabolism. It functions in the pathway steroid metabolism; cholesterol metabolism. Its function is as follows. A cytochrome P450 monooxygenase that catalyzes the side-chain hydroxylation and cleavage of cholesterol to pregnenolone, the precursor of most steroid hormones. Catalyzes three sequential oxidation reactions of cholesterol, namely the hydroxylation at C22 followed with the hydroxylation at C20 to yield 20R,22R-hydroxycholesterol that is further cleaved between C20 and C22 to yield the C21-steroid pregnenolone and 4-methylpentanal. Mechanistically, uses molecular oxygen inserting one oxygen atom into a substrate and reducing the second into a water molecule. Two electrons are provided by NADPH via a two-protein mitochondrial transfer system comprising flavoprotein FDXR (adrenodoxin/ferredoxin reductase) and nonheme iron-sulfur protein FDX1 or FDX2 (adrenodoxin/ferredoxin). This is Cholesterol side-chain cleavage enzyme, mitochondrial from Ovis aries (Sheep).